The following is a 411-amino-acid chain: Carbohydrate sulfotransferase 1 (411 aa).

Position 1 (Met-1) is a topological domain, cytoplasmic. A helical; Signal-anchor for type II membrane protein transmembrane segment spans residues 2–23 (QCSWKAVLLLALASIAIQYTAI). The Lumenal segment spans residues 24–411 (RTFTAKSFHT…VEERDFRPFL (388 aa)). Residue Asn-56 is glycosylated (N-linked (GlcNAc...) asparagine). 69 to 75 (TRSGSSF) lines the 3'-phosphoadenylyl sulfate pocket. Residues Asn-145 and Asn-189 are each glycosylated (N-linked (GlcNAc...) asparagine). 234-242 (RDPRGILAS) contributes to the 3'-phosphoadenylyl sulfate binding site. An N-linked (GlcNAc...) asparagine glycan is attached at Asn-334. The Cell attachment site motif lies at 337-339 (RGD).

This sequence belongs to the sulfotransferase 1 family. Gal/GlcNAc/GalNAc subfamily.

It is found in the golgi apparatus membrane. It carries out the reaction 3'-phosphoadenylyl sulfate + keratan = adenosine 3',5'-bisphosphate + keratan 6'-sulfate.. Its pathway is glycan metabolism. In terms of biological role, sulfotransferase that utilizes 3'-phospho-5'-adenylyl sulfate (PAPS) as sulfonate donor to catalyze the transfer of sulfate to position 6 of internal galactose (Gal) residues of keratan. Cooperates with B4GALT4 and B3GNT7 glycosyltransferases and CHST6 sulfotransferase to construct and elongate disulfated disaccharide unit [-&gt;3(6-sulfoGalbeta)1-&gt;4(6-sulfoGlcNAcbeta)1-&gt;] within keratan sulfate polymer. Has a preference for sulfating keratan sulfate, but it also transfers sulfate to the unsulfated polymer. Involved in biosynthesis of phosphacan, a major keratan sulfate proteoglycan in the developing brain. Involved in biosynthesis of 6-sulfoGalbeta-containing O-linked glycans in high endothelial venules of lymph nodes. May act in a synergistic manner with CHST4 to generate sialyl 6',6-disulfo Lewis X motif, a recognition determinant for immune cell receptors implicated in leukocyte trafficking. Catalyzes sulfation of N-acetyllactosamine (LacNAc) oligosaccharides with highest efficiency for sialylated LacNAc structures. The chain is Carbohydrate sulfotransferase 1 (Chst1) from Rattus norvegicus (Rat).